A 30-amino-acid polypeptide reads, in one-letter code: Putative cytochrome bd-II ubiquinol oxidase subunit AppX (30 aa).

The chain crosses the membrane as a helical span at residues 4 to 24; sequence LLWFVGILLMCSLSTLVLVWL.

It belongs to the cytochrome ubiquinol oxidase subunit X family. Able to interact with CydA and CydB upon overexpression.

Its subcellular location is the cell inner membrane. Might be part of cytochrome bd-II oxidase (appB and appC). Able to restore reductant resistance to a cydX deletion mutant upon overexpression. CydX and this protein may have some functional overlap. This chain is Putative cytochrome bd-II ubiquinol oxidase subunit AppX (appX), found in Escherichia coli (strain K12).